Consider the following 159-residue polypeptide: NADH-quinone oxidoreductase subunit I (159 aa).

2 4Fe-4S ferredoxin-type domains span residues 51–80 and 90–119; these read RRYENGEERCIACKLCEAICPAQAIVIEAD and TRYDIDMTKCIYCGLCQEACPVDAIVEGPN. [4Fe-4S] cluster-binding residues include Cys60, Cys63, Cys66, Cys70, Cys99, Cys102, Cys105, and Cys109.

Belongs to the complex I 23 kDa subunit family. NDH-1 is composed of 14 different subunits. Subunits NuoA, H, J, K, L, M, N constitute the membrane sector of the complex. [4Fe-4S] cluster serves as cofactor.

It is found in the cell inner membrane. The enzyme catalyses a quinone + NADH + 5 H(+)(in) = a quinol + NAD(+) + 4 H(+)(out). Functionally, NDH-1 shuttles electrons from NADH, via FMN and iron-sulfur (Fe-S) centers, to quinones in the respiratory chain. The immediate electron acceptor for the enzyme in this species is believed to be ubiquinone. Couples the redox reaction to proton translocation (for every two electrons transferred, four hydrogen ions are translocated across the cytoplasmic membrane), and thus conserves the redox energy in a proton gradient. The polypeptide is NADH-quinone oxidoreductase subunit I (Rickettsia bellii (strain OSU 85-389)).